We begin with the raw amino-acid sequence, 846 residues long: MATPVQASTVIRVKPHHYIHVLDNNTNVTRVEVGPQTFTRQDHERVLNPTPLPMILIPPRQYCIIENPIIRDKEGKLVVDKFNQPKLRHGDQEIRFSQDPFPLYPGEVVIAQPVPLQVIQTNSALRLKCLRDFVEVKADKTTVSHIAGDEWLFEGPGTYYPRVEVQVVEPVRAVIIKENQALKLRARLSFVDRRDVVRQVGEEWLVRESGAYLPGVSEEIVGFIQALVLTDRIAYQLLATRSFTDSFGKVRKAGEEWIITQKDCDTYIPDVNEKVIRDIKAITLTNRQYCIVENPIDPKTGKNKLGHKELLQGDRTFFLMPGESLVKGIQNVNVLSEDEALLLSAKEEFVEKKGTTTIVHKPGDLWMIYGPCDYIPPIQVDVVERRKRIPLDVNEGIYVRDIKTGKVRSVHGSSYMLLPNEERWAKPLAPIVEELLKKSASRDQNEEHNESDRDSTKVITYRVPHNAAVQIFDYRKKEARVVFGPELVMLEPDEEFTVLSLSGKIPKRPNHIRSLALFLGPDFMTDLITVETADHARLSLKLSYNWHFKVEQDNPSKLFATSDFTGDLCKATGSLVRAAVAASTFDNFHKHSSDIIQQAVFGSTDGSSNDCLYFETNGLVITNIDVQSVEPVDQRTLDSLQKSVQLAIEITTKSQEATARQEAERLEQMARGELERQKIIDEAKNEESRSKLVQLQAQSAAVESTGQAVAEARARAEAAIIEAESEIKQARLSTRAIEIEALSEIENLKAKHIVEIQHIKSLNNLELIKAKESATIETTKFENYVEALGSDTIKSIAQAPEETKAKLLAGLGLKSFMITDGKSPLNLFDTANGLIADAQRSEVDEE.

A2 carries the N-acetylalanine modification. MVP repeat units follow at residues 2–60 (ATPV…IPPR), 61–115 (QYCI…QPVP), 116–172 (LQVI…EPVR), 173–225 (AVII…GFIQ), 226–280 (ALVL…RDIK), 281–332 (AITL…IQNV), 333–388 (NVLS…RRKR), 389–458 (IPLD…STKV), and 459–521 (ITYR…FLGP).

As to quaternary structure, the vault ribonucleoprotein particle is a huge (400 A x 670 A) cage structure of 12.9 MDa. It consists of a dimer of half-vaults, with each half-vault comprising 39 identical major vault protein (MVP) chains. Dictyostelium is one of the few organisms in which the major component is actually two proteins (alpha and beta).

It localises to the cytoplasm. Its subcellular location is the nucleus. Its function is as follows. Unknown, though MVP-beta is required for normal vault structure. The polypeptide is Major vault protein beta (mvpB) (Dictyostelium discoideum (Social amoeba)).